The primary structure comprises 95 residues: Aspartyl/glutamyl-tRNA(Asn/Gln) amidotransferase subunit C (95 aa).

Belongs to the GatC family. In terms of assembly, heterotrimer of A, B and C subunits.

It carries out the reaction L-glutamyl-tRNA(Gln) + L-glutamine + ATP + H2O = L-glutaminyl-tRNA(Gln) + L-glutamate + ADP + phosphate + H(+). It catalyses the reaction L-aspartyl-tRNA(Asn) + L-glutamine + ATP + H2O = L-asparaginyl-tRNA(Asn) + L-glutamate + ADP + phosphate + 2 H(+). Allows the formation of correctly charged Asn-tRNA(Asn) or Gln-tRNA(Gln) through the transamidation of misacylated Asp-tRNA(Asn) or Glu-tRNA(Gln) in organisms which lack either or both of asparaginyl-tRNA or glutaminyl-tRNA synthetases. The reaction takes place in the presence of glutamine and ATP through an activated phospho-Asp-tRNA(Asn) or phospho-Glu-tRNA(Gln). The polypeptide is Aspartyl/glutamyl-tRNA(Asn/Gln) amidotransferase subunit C (Azotobacter vinelandii (strain DJ / ATCC BAA-1303)).